A 194-amino-acid chain; its full sequence is Prostaglandin-H2 D-isomerase (194 aa).

Positions 1–24 are cleaved as a signal peptide; sequence MAASHTLWMGLVLLGVLGVLQTRA. Residue Gln-25 is modified to Pyrrolidone carboxylic acid. Asn-51 is a glycosylation site (N-linked (GlcNAc...) asparagine). The active-site Nucleophile is Cys-65. Asn-78 carries N-linked (GlcNAc...) asparagine glycosylation. An intrachain disulfide couples Cys-89 to Cys-189.

Belongs to the calycin superfamily. Lipocalin family. Monomer. In terms of tissue distribution, in the male reproductive system, it is expressed in the testis and epididymis, and is secreted into the seminal fluid.

Its subcellular location is the rough endoplasmic reticulum. It localises to the nucleus membrane. The protein resides in the golgi apparatus. The protein localises to the cytoplasm. It is found in the perinuclear region. Its subcellular location is the secreted. It carries out the reaction prostaglandin H2 = prostaglandin D2. Functionally, catalyzes the conversion of PGH2 to PGD2, a prostaglandin involved in smooth muscle contraction/relaxation and a potent inhibitor of platelet aggregation. Involved in a variety of CNS functions, such as sedation, NREM sleep and PGE2-induced allodynia, and may have an anti-apoptotic role in oligodendrocytes. Binds small non-substrate lipophilic molecules, including biliverdin, bilirubin, retinal, retinoic acid and thyroid hormone, and may act as a scavenger for harmful hydrophobic molecules and as a secretory retinoid and thyroid hormone transporter. Possibly involved in development and maintenance of the blood-brain, blood-retina, blood-aqueous humor and blood-testis barrier. It is likely to play important roles in both maturation and maintenance of the central nervous system and male reproductive system. Involved in PLA2G3-dependent maturation of mast cells. PLA2G3 is secreted by immature mast cells and acts on nearby fibroblasts upstream to PTDGS to synthesize PGD2, which in turn promotes mast cell maturation and degranulation via PTGDR. The polypeptide is Prostaglandin-H2 D-isomerase (PTGDS) (Equus caballus (Horse)).